Consider the following 420-residue polypeptide: Probable pectate lyase C (420 aa).

The N-terminal stretch at 1–20 is a signal peptide; that stretch reads MKLSAPLLVSLAAFSQAVTA. Residues Asn49, Asn165, and Asn202 are each glycosylated (N-linked (GlcNAc...) asparagine). Arg205 is an active-site residue. In terms of domain architecture, EF-hand spans 262–297; that stretch reads NANFHGYVDNNYYDPDKDGQLDGSELGVSSSNYGGM. Residues Asp275, Asp277, Asp279, Gln281, and Glu286 each contribute to the Ca(2+) site. The tract at residues 357 to 395 is disordered; that stretch reads ATMGGPGTLNGGTPAKDTDGDGIPDEAEKQLGTDPNTND. Asn394 carries an N-linked (GlcNAc...) asparagine glycan.

Belongs to the polysaccharide lyase 1 family. Requires Ca(2+) as cofactor.

It is found in the secreted. It catalyses the reaction Eliminative cleavage of (1-&gt;4)-alpha-D-galacturonan to give oligosaccharides with 4-deoxy-alpha-D-galact-4-enuronosyl groups at their non-reducing ends.. Pectinolytic enzyme consist of four classes of enzymes: pectin lyase, polygalacturonase, pectin methylesterase and rhamnogalacturonase. Among pectinolytic enzymes, pectin lyase is the most important in depolymerization of pectin, since it cleaves internal glycosidic bonds of highly methylated pectins. Favors pectate, the anion, over pectin, the methyl ester. The polypeptide is Probable pectate lyase C (plyC) (Neosartorya fischeri (strain ATCC 1020 / DSM 3700 / CBS 544.65 / FGSC A1164 / JCM 1740 / NRRL 181 / WB 181) (Aspergillus fischerianus)).